The sequence spans 1790 residues: Non-reducing polyketide synthase gsfA (1790 aa).

Residues 20-263 (GDQRTLFRKL…AMRKIQGMWH (244 aa)) are N-terminal acylcarrier protein transacylase domain (SAT). The 431-residue stretch at 392–822 (SSKIAVVGMS…GGNTAMIIEE (431 aa)) folds into the Ketosynthase family 3 (KS3) domain. Active-site for beta-ketoacyl synthase activity residues include Cys-563, His-698, and His-741. A malonyl-CoA:ACP transacylase (MAT) domain region spans residues 922–1223 (FAFAGQGTFY…CSTLHRDSDN (302 aa)). Positions 1298–1615 (TSSIHRLYSE…PRIMLNRFFQ (318 aa)) are product template (PT) domain. The interval 1302–1435 (HRLYSENYDS…AYYEDPSTWL (134 aa)) is N-terminal hotdog fold. The PKS/mFAS DH domain occupies 1302–1611 (HRLYSENYDS…FRQWPRIMLN (310 aa)). His-1334 serves as the catalytic Proton acceptor; for dehydratase activity. A C-terminal hotdog fold region spans residues 1460-1611 (MANKLTTSLA…FRQWPRIMLN (152 aa)). Residue Asp-1518 is the Proton donor; for dehydratase activity of the active site. Disordered stretches follow at residues 1621–1648 (PPAP…EKTT) and 1686–1718 (LDYS…ADGA). The span at 1699-1708 (SDERIEKTDS) shows a compositional bias: basic and acidic residues. Residues 1716–1790 (DGANDVTSRA…TIGDLKKLLS (75 aa)) enclose the Carrier domain. An O-(pantetheine 4'-phosphoryl)serine modification is found at Ser-1753.

It catalyses the reaction 6 malonyl-CoA + acetyl-CoA + 4 H(+) = 2-(2,4-dihydroxy-6-oxidobenzoyl)-5-hydroxy-3-methylbenzenolate + 6 CO2 + 7 CoA + H2O. It functions in the pathway secondary metabolite biosynthesis; terpenoid biosynthesis. Functionally, norlichexanthone synthase; part of the gene cluster that mediates the biosynthesis of griseofulvin, an important antifungal drug that has been in use for a long time for treating dermatophyte infections. The first step of the pathway is the formation of the heptaketide backbone by gsfA which is initiated by priming with acetyl-CoA, followed by sequential condensations of 6 malonyl-CoA units. The resulting benzophenone can undergo a spontaneous dehydration to form norlichexanthone. However, the true precursor for the griseofulvin biosynthesis is not norlichexanthone, but the heptaketide benzophenone that is O-methylated at 3-OH by gsfB to produce griseophenone D which is further methylated at 9-OH by gsfC to yield griseophenone C. Griseophenone C is then substrate of halogenase gsfI which is responsible for the regio-specific chlorination at the C13 position to form griseophenone B. The cytochrome P450 gsfF catalyzes the coupling of orcinol and phloroglucinol rings in griseophenone B to form desmethyl-dehydrogriseofulvin A which is further methylated at 5-OH by gsfD to yield dehydrogriseofulvin. Finally, gsfE performs stereospecific reduction of enone 18 of dehydrogriseofulvin to afford the final product griseofulvin. The polypeptide is Non-reducing polyketide synthase gsfA (Penicillium aethiopicum).